Consider the following 226-residue polypeptide: Cytochrome c oxidase subunit 2 (226 aa).

The Mitochondrial intermembrane segment spans residues 1-14; the sequence is MAYPLQLGLQDATS. Residues 15–45 traverse the membrane as a helical segment; the sequence is PIMEELTSFHDHTLMIVFLISTLVLYIISLM. Over 46-59 the chain is Mitochondrial matrix; the sequence is LTTKLTHTSTMDAQ. Residues 60-87 traverse the membrane as a helical segment; that stretch reads EIETIWTILPAIILIMIALPSLRVLYMM. The Mitochondrial intermembrane segment spans residues 88–226; that stretch reads DEINNPALTV…KYFEAWSASM (139 aa). Residues H161, C196, E198, C200, H204, and M207 each coordinate Cu cation. E198 contributes to the Mg(2+) binding site. Y218 bears the Phosphotyrosine mark.

It belongs to the cytochrome c oxidase subunit 2 family. Component of the cytochrome c oxidase (complex IV, CIV), a multisubunit enzyme composed of 14 subunits. The complex is composed of a catalytic core of 3 subunits MT-CO1, MT-CO2 and MT-CO3, encoded in the mitochondrial DNA, and 11 supernumerary subunits COX4I, COX5A, COX5B, COX6A, COX6B, COX6C, COX7A, COX7B, COX7C, COX8 and NDUFA4, which are encoded in the nuclear genome. The complex exists as a monomer or a dimer and forms supercomplexes (SCs) in the inner mitochondrial membrane with NADH-ubiquinone oxidoreductase (complex I, CI) and ubiquinol-cytochrome c oxidoreductase (cytochrome b-c1 complex, complex III, CIII), resulting in different assemblies (supercomplex SCI(1)III(2)IV(1) and megacomplex MCI(2)III(2)IV(2)). Found in a complex with TMEM177, COA6, COX18, COX20, SCO1 and SCO2. Interacts with TMEM177 in a COX20-dependent manner. Interacts with COX20. Interacts with COX16. It depends on Cu cation as a cofactor.

It is found in the mitochondrion inner membrane. It catalyses the reaction 4 Fe(II)-[cytochrome c] + O2 + 8 H(+)(in) = 4 Fe(III)-[cytochrome c] + 2 H2O + 4 H(+)(out). Functionally, component of the cytochrome c oxidase, the last enzyme in the mitochondrial electron transport chain which drives oxidative phosphorylation. The respiratory chain contains 3 multisubunit complexes succinate dehydrogenase (complex II, CII), ubiquinol-cytochrome c oxidoreductase (cytochrome b-c1 complex, complex III, CIII) and cytochrome c oxidase (complex IV, CIV), that cooperate to transfer electrons derived from NADH and succinate to molecular oxygen, creating an electrochemical gradient over the inner membrane that drives transmembrane transport and the ATP synthase. Cytochrome c oxidase is the component of the respiratory chain that catalyzes the reduction of oxygen to water. Electrons originating from reduced cytochrome c in the intermembrane space (IMS) are transferred via the dinuclear copper A center (CU(A)) of subunit 2 and heme A of subunit 1 to the active site in subunit 1, a binuclear center (BNC) formed by heme A3 and copper B (CU(B)). The BNC reduces molecular oxygen to 2 water molecules using 4 electrons from cytochrome c in the IMS and 4 protons from the mitochondrial matrix. The chain is Cytochrome c oxidase subunit 2 (MT-CO2) from Perognathus flavus (Silky pocket mouse).